Reading from the N-terminus, the 63-residue chain is Small ribosomal subunit protein bS21 (63 aa).

It belongs to the bacterial ribosomal protein bS21 family.

This Porphyromonas gingivalis (strain ATCC BAA-308 / W83) protein is Small ribosomal subunit protein bS21.